Consider the following 637-residue polypeptide: Threonine--tRNA ligase (637 aa).

Residues 1 to 61 (MPNVKLPDGN…KEDCSLIIVT (61 aa)) form the TGS domain. The segment at 242–533 (DHRKLGKALD…LIEHYAGKLP (292 aa)) is catalytic. Zn(2+)-binding residues include cysteine 333, histidine 384, and histidine 510.

Belongs to the class-II aminoacyl-tRNA synthetase family. Homodimer. The cofactor is Zn(2+).

The protein resides in the cytoplasm. It catalyses the reaction tRNA(Thr) + L-threonine + ATP = L-threonyl-tRNA(Thr) + AMP + diphosphate + H(+). In terms of biological role, catalyzes the attachment of threonine to tRNA(Thr) in a two-step reaction: L-threonine is first activated by ATP to form Thr-AMP and then transferred to the acceptor end of tRNA(Thr). Also edits incorrectly charged L-seryl-tRNA(Thr). The sequence is that of Threonine--tRNA ligase from Legionella pneumophila (strain Paris).